The following is a 205-amino-acid chain: Outer-membrane lipoprotein LolB (205 aa).

The N-terminal stretch at 1 to 17 is a signal peptide; it reads MFLRHCITFTLIALLAG. A lipid anchor (N-palmitoyl cysteine) is attached at cysteine 18. Residue cysteine 18 is the site of S-diacylglycerol cysteine attachment.

This sequence belongs to the LolB family. In terms of assembly, monomer.

The protein localises to the cell outer membrane. In terms of biological role, plays a critical role in the incorporation of lipoproteins in the outer membrane after they are released by the LolA protein. The protein is Outer-membrane lipoprotein LolB of Pseudomonas putida (strain ATCC 47054 / DSM 6125 / CFBP 8728 / NCIMB 11950 / KT2440).